The following is a 78-amino-acid chain: Large ribosomal subunit protein bL28 (78 aa).

Belongs to the bacterial ribosomal protein bL28 family.

The sequence is that of Large ribosomal subunit protein bL28 from Prochlorococcus marinus (strain SARG / CCMP1375 / SS120).